The primary structure comprises 157 residues: Phosphopantetheine adenylyltransferase (157 aa).

Substrate is bound at residue Ser8. Residues Ser8–Phe9 and His16 contribute to the ATP site. Residues Lys40, Thr72, and Arg86 each coordinate substrate. Residues Gly87 to Arg89, Glu97, and Tyr122 to Ser128 each bind ATP.

This sequence belongs to the bacterial CoaD family. Homohexamer. The cofactor is Mg(2+).

The protein resides in the cytoplasm. It carries out the reaction (R)-4'-phosphopantetheine + ATP + H(+) = 3'-dephospho-CoA + diphosphate. It functions in the pathway cofactor biosynthesis; coenzyme A biosynthesis; CoA from (R)-pantothenate: step 4/5. Reversibly transfers an adenylyl group from ATP to 4'-phosphopantetheine, yielding dephospho-CoA (dPCoA) and pyrophosphate. The polypeptide is Phosphopantetheine adenylyltransferase (Crocosphaera subtropica (strain ATCC 51142 / BH68) (Cyanothece sp. (strain ATCC 51142))).